Reading from the N-terminus, the 234-residue chain is Potassium/proton antiporter CemA (234 aa).

4 helical membrane passes run 8-28 (IPLR…WIPL), 117-137 (TICF…LFIL), 157-177 (ILFV…ELLI), and 193-213 (IILS…FKYW).

It belongs to the CemA family.

It localises to the plastid. Its subcellular location is the chloroplast inner membrane. It catalyses the reaction K(+)(in) + H(+)(out) = K(+)(out) + H(+)(in). Contributes to K(+)/H(+) antiport activity by supporting proton efflux to control proton extrusion and homeostasis in chloroplasts in a light-dependent manner to modulate photosynthesis. Prevents excessive induction of non-photochemical quenching (NPQ) under continuous-light conditions. Indirectly promotes efficient inorganic carbon uptake into chloroplasts. This Citrus sinensis (Sweet orange) protein is Potassium/proton antiporter CemA.